The chain runs to 99 residues: Class II hydrophobin 1 (99 aa).

Positions methionine 1–threonine 26 are cleaved as a signal peptide. Intrachain disulfides connect cysteine 31–cysteine 80, cysteine 41–cysteine 71, cysteine 42–cysteine 54, and cysteine 81–cysteine 92.

The protein belongs to the cerato-ulmin hydrophobin family. As to quaternary structure, homotetramer. Further self-assembles to form highly ordered films at water-air interfaces through intermolecular interactions.

The protein resides in the secreted. Its subcellular location is the cell wall. In terms of biological role, aerial growth, conidiation, and dispersal of filamentous fungi in the environment rely upon a capability of their secreting small amphipathic proteins called hydrophobins (HPBs) with low sequence identity. Class I can self-assemble into an outermost layer of rodlet bundles on aerial cell surfaces, conferring cellular hydrophobicity that supports fungal growth, development and dispersal; whereas Class II form highly ordered films at water-air interfaces through intermolecular interactions but contribute nothing to the rodlet structure. HFB1 is a class II hydrophobin that shows antifungal activity against pathogenic and opportunistic fungi such as Cryptococcus neoformans, Nakaseomyces glabrataa, or Candida tropicalis. This Sodiomyces alkalinus (strain CBS 110278 / VKM F-3762 / F11) (Alkaliphilic filamentous fungus) protein is Class II hydrophobin 1.